A 218-amino-acid chain; its full sequence is MICIPVIDKDVSDAINSAKEALKYGDIVEFRIDLLNDVNFKDIEEFSKIPSIITIRAEWEGGAWRKSNEERIELLKNAIKNNAKFIDIELKEEKNLELVKYRNEIGSTTKIIVSYHDFEKTPEIDELIDVVEKELKIGDIAKFATFAHSKEDTLKILNLMNRYSGKIIAIGMGESGKLTRILGLDFGSILTFASMGGKASAPGQVDVKKLKEILKLIN.

Residues 29–31 (EFR) and arginine 56 each bind 3-dehydroquinate. Histidine 116 functions as the Proton donor/acceptor in the catalytic mechanism. Residue lysine 142 is the Schiff-base intermediate with substrate of the active site. Residues arginine 180, serine 200, and glutamine 204 each coordinate 3-dehydroquinate.

It belongs to the type-I 3-dehydroquinase family. In terms of assembly, homodimer.

The enzyme catalyses 3-dehydroquinate = 3-dehydroshikimate + H2O. It functions in the pathway metabolic intermediate biosynthesis; chorismate biosynthesis; chorismate from D-erythrose 4-phosphate and phosphoenolpyruvate: step 3/7. Its function is as follows. Involved in the third step of the chorismate pathway, which leads to the biosynthesis of aromatic amino acids. Catalyzes the cis-dehydration of 3-dehydroquinate (DHQ) and introduces the first double bond of the aromatic ring to yield 3-dehydroshikimate. This is 3-dehydroquinate dehydratase from Methanococcus maripaludis (strain DSM 14266 / JCM 13030 / NBRC 101832 / S2 / LL).